A 123-amino-acid polypeptide reads, in one-letter code: Large ribosomal subunit protein uL14 (123 aa).

It belongs to the universal ribosomal protein uL14 family. As to quaternary structure, part of the 50S ribosomal subunit. Forms a cluster with proteins L3 and L19. In the 70S ribosome, L14 and L19 interact and together make contacts with the 16S rRNA in bridges B5 and B8.

Its function is as follows. Binds to 23S rRNA. Forms part of two intersubunit bridges in the 70S ribosome. This chain is Large ribosomal subunit protein uL14, found in Buchnera aphidicola subsp. Acyrthosiphon kondoi (Acyrthosiphon kondoi symbiotic bacterium).